Here is an 81-residue protein sequence, read N- to C-terminus: MAHSVKIYDTCIGCTQCVRACPTDVLEMVPWNGCRAKQIASAPRTEDCVGCKRCESACPTDYLSVRVYLRQETTRSMGLAY.

4Fe-4S ferredoxin-type domains lie at 1–31 and 39–68; these read MAHSVKIYDTCIGCTQCVRACPTDVLEMVPW and IASAPRTEDCVGCKRCESACPTDYLSVRVY. [4Fe-4S] cluster-binding residues include Cys-11, Cys-14, Cys-17, Cys-21, Cys-48, Cys-51, Cys-54, and Cys-58.

The eukaryotic PSI reaction center is composed of at least 11 subunits. [4Fe-4S] cluster serves as cofactor.

The protein resides in the plastid. It localises to the chloroplast thylakoid membrane. It catalyses the reaction reduced [plastocyanin] + hnu + oxidized [2Fe-2S]-[ferredoxin] = oxidized [plastocyanin] + reduced [2Fe-2S]-[ferredoxin]. In terms of biological role, apoprotein for the two 4Fe-4S centers FA and FB of photosystem I (PSI); essential for photochemical activity. FB is the terminal electron acceptor of PSI, donating electrons to ferredoxin. The C-terminus interacts with PsaA/B/D and helps assemble the protein into the PSI complex. Required for binding of PsaD and PsaE to PSI. PSI is a plastocyanin-ferredoxin oxidoreductase, converting photonic excitation into a charge separation, which transfers an electron from the donor P700 chlorophyll pair to the spectroscopically characterized acceptors A0, A1, FX, FA and FB in turn. The polypeptide is Photosystem I iron-sulfur center (Welwitschia mirabilis (Tree tumbo)).